A 304-amino-acid polypeptide reads, in one-letter code: Putative ankyrin repeat protein R598 (304 aa).

ANK repeat units lie at residues 7–36 (NIVT…SINL), 77–107 (YIST…PVDF), 122–151 (GSNH…DVNA), 152–181 (HNYL…NVLR), 183–209 (ANGN…EIDM), 210–239 (NLSR…DINK), and 265–293 (FDFT…NVDI).

This Acanthamoeba polyphaga (Amoeba) protein is Putative ankyrin repeat protein R598.